A 226-amino-acid polypeptide reads, in one-letter code: 2,3-bisphosphoglycerate-dependent phosphoglycerate mutase (226 aa).

Substrate contacts are provided by residues Arg-8–Asn-15, Thr-21–Gly-22, Arg-58, Glu-112–Tyr-115, Lys-123, Arg-139–Arg-140, and Gly-183–Asn-184. His-9 functions as the Tele-phosphohistidine intermediate in the catalytic mechanism. Residue Glu-112 is the Proton donor/acceptor of the active site.

This sequence belongs to the phosphoglycerate mutase family. BPG-dependent PGAM subfamily.

It carries out the reaction (2R)-2-phosphoglycerate = (2R)-3-phosphoglycerate. Its pathway is carbohydrate degradation; glycolysis; pyruvate from D-glyceraldehyde 3-phosphate: step 3/5. Catalyzes the interconversion of 2-phosphoglycerate and 3-phosphoglycerate. The polypeptide is 2,3-bisphosphoglycerate-dependent phosphoglycerate mutase (Protochlamydia amoebophila (strain UWE25)).